We begin with the raw amino-acid sequence, 223 residues long: GRF1-interacting factor 3 (223 aa).

The interval 179-223 is disordered; the sequence is ANNAGPNDASGGGKPDGTNMSQSGADGQGGSAARHGGGDAKTEGK. Residues 214–223 show a composition bias toward basic and acidic residues; the sequence is GGGDAKTEGK.

The protein belongs to the SS18 family. In terms of assembly, interacts with GRF1. As to expression, predominantly expressed in shoot tips containing the shoot apical meristem (SAM) and flower buds. Also expressed in mature flowers.

In terms of biological role, transcription coactivator that plays a role in the regulation of cell expansion in leaf and cotyledons tissues. Component of a network formed by miR396, the GRFs and their interacting factors (GIFs) acting in the regulation of meristem function, at least partially through the control of cell proliferation. GIFs are involved in the positive regulation of cell proliferation of lateral organs in a functionally redundant manner. This is GRF1-interacting factor 3 (GIF3) from Arabidopsis thaliana (Mouse-ear cress).